The primary structure comprises 633 residues: DNA mismatch repair protein MutL (633 aa).

2 disordered regions span residues 337-364 and 383-405; these read RPDDQLAPPGATSLTEPRPTGAAAGEFG and VGWSGGSSASGGSSGYSAYTRPE. Over residues 385-396 the composition is skewed to gly residues; it reads WSGGSSASGGSS.

It belongs to the DNA mismatch repair MutL/HexB family.

Its function is as follows. This protein is involved in the repair of mismatches in DNA. It is required for dam-dependent methyl-directed DNA mismatch repair. May act as a 'molecular matchmaker', a protein that promotes the formation of a stable complex between two or more DNA-binding proteins in an ATP-dependent manner without itself being part of a final effector complex. This chain is DNA mismatch repair protein MutL, found in Pseudomonas aeruginosa (strain LESB58).